We begin with the raw amino-acid sequence, 111 residues long: Cell cycle protein GpsB (111 aa).

The stretch at 38–72 forms a coiled coil; sequence IKDYEAFHKEFEQLKQQNARLKRELEEQKLAVTQV.

This sequence belongs to the GpsB family. In terms of assembly, forms polymers through the coiled coil domains. Interacts with PBP1, MreC and EzrA.

The protein resides in the cytoplasm. Its function is as follows. Divisome component that associates with the complex late in its assembly, after the Z-ring is formed, and is dependent on DivIC and PBP2B for its recruitment to the divisome. Together with EzrA, is a key component of the system that regulates PBP1 localization during cell cycle progression. Its main role could be the removal of PBP1 from the cell pole after pole maturation is completed. Also contributes to the recruitment of PBP1 to the division complex. Not essential for septum formation. This Bacillus cereus (strain G9842) protein is Cell cycle protein GpsB.